Here is a 685-residue protein sequence, read N- to C-terminus: Polyphosphate kinase (685 aa).

Asn-45 is a binding site for ATP. Mg(2+) contacts are provided by Arg-375 and Arg-405. The active-site Phosphohistidine intermediate is His-435. 3 residues coordinate ATP: Tyr-468, Arg-564, and His-592.

It belongs to the polyphosphate kinase 1 (PPK1) family. It depends on Mg(2+) as a cofactor. An intermediate of this reaction is the autophosphorylated ppk in which a phosphate is covalently linked to a histidine residue through a N-P bond.

The catalysed reaction is [phosphate](n) + ATP = [phosphate](n+1) + ADP. Its function is as follows. Catalyzes the reversible transfer of the terminal phosphate of ATP to form a long-chain polyphosphate (polyP). This Neisseria gonorrhoeae (strain ATCC 700825 / FA 1090) protein is Polyphosphate kinase.